Consider the following 111-residue polypeptide: Cytochrome c (111 aa).

The residue at position 1 (S1) is an N-acetylserine. Heme c contacts are provided by C22, C25, and H26. Position 80 is an N6,N6,N6-trimethyllysine (K80). M88 serves as a coordination point for heme c.

It belongs to the cytochrome c family. In terms of processing, binds 1 heme c group covalently per subunit.

It is found in the mitochondrion intermembrane space. Electron carrier protein. The oxidized form of the cytochrome c heme group can accept an electron from the heme group of the cytochrome c1 subunit of cytochrome reductase. Cytochrome c then transfers this electron to the cytochrome oxidase complex, the final protein carrier in the mitochondrial electron-transport chain. The sequence is that of Cytochrome c from Ulva intestinalis (Hollow green nori).